Reading from the N-terminus, the 335-residue chain is Sphingomyelinase C (335 aa).

An N-terminal signal peptide occupies residues 1-28 (MEKFKIIKTIPKICGAFIFLLFFTFLFG).

This sequence belongs to the neutral sphingomyelinase family.

The protein resides in the secreted. It carries out the reaction a sphingomyelin + H2O = phosphocholine + an N-acylsphing-4-enine + H(+). Virulence factor that promotes intracellular proliferation by mediating the disruption of the phagocytic vacuole and the release of bacteria into the host cell cytosol. May act in concert with the phospholipases PlcA and PlcB and the hemolysin hly to mediate efficient escape from the vacuole. The protein is Sphingomyelinase C (smcL) of Listeria ivanovii.